We begin with the raw amino-acid sequence, 367 residues long: Phosphoribosylaminoimidazole-succinocarboxamide synthase (367 aa).

This sequence belongs to the SAICAR synthetase family.

The enzyme catalyses 5-amino-1-(5-phospho-D-ribosyl)imidazole-4-carboxylate + L-aspartate + ATP = (2S)-2-[5-amino-1-(5-phospho-beta-D-ribosyl)imidazole-4-carboxamido]succinate + ADP + phosphate + 2 H(+). The protein operates within purine metabolism; IMP biosynthesis via de novo pathway; 5-amino-1-(5-phospho-D-ribosyl)imidazole-4-carboxamide from 5-amino-1-(5-phospho-D-ribosyl)imidazole-4-carboxylate: step 1/2. In Shewanella pealeana (strain ATCC 700345 / ANG-SQ1), this protein is Phosphoribosylaminoimidazole-succinocarboxamide synthase.